A 247-amino-acid chain; its full sequence is Auxin-responsive protein IAA13 (247 aa).

Residues 14–18 (LELGL) carry the EAR-like (transcriptional repression) motif. The span at 25 to 40 (GTAAKIGKSGGGGAWG) shows a compositional bias: gly residues. 2 disordered regions span residues 25 to 44 (GTAA…ERGR) and 49 to 119 (KDFP…PKDV). Residues 62 to 75 (SASHAGSSPPRSSS) are compositionally biased toward low complexity. Polar residues predominate over residues 87–98 (RMNSLVNNQATK). The segment covering 106-119 (AGKKKVKDDEPKDV) has biased composition (basic and acidic residues). A PB1 domain is found at 129–225 (VGFIKVNMDG…SVKRLRVMKT (97 aa)).

It belongs to the Aux/IAA family. As to quaternary structure, homodimers and heterodimers. Interacts with TPL. As to expression, preferentially expressed in stems.

The protein localises to the nucleus. Aux/IAA proteins are short-lived transcriptional factors that function as repressors of early auxin response genes at low auxin concentrations. Repression is thought to result from the interaction with auxin response factors (ARFs), proteins that bind to the auxin-responsive promoter element (AuxRE). Formation of heterodimers with ARF proteins may alter their ability to modulate early auxin response genes expression. This is Auxin-responsive protein IAA13 (IAA13) from Arabidopsis thaliana (Mouse-ear cress).